Here is a 130-residue protein sequence, read N- to C-terminus: Glycine cleavage system H protein (130 aa).

The region spanning Thr24–Lys106 is the Lipoyl-binding domain. N6-lipoyllysine is present on Lys65.

Belongs to the GcvH family. As to quaternary structure, the glycine cleavage system is composed of four proteins: P, T, L and H. (R)-lipoate serves as cofactor.

The glycine cleavage system catalyzes the degradation of glycine. The H protein shuttles the methylamine group of glycine from the P protein to the T protein. The sequence is that of Glycine cleavage system H protein from Teredinibacter turnerae (strain ATCC 39867 / T7901).